A 284-amino-acid polypeptide reads, in one-letter code: Shikimate dehydrogenase (NADP(+)) (284 aa).

Shikimate contacts are provided by residues 20 to 22 (SIS) and serine 67. Lysine 71 serves as the catalytic Proton acceptor. Aspartate 83 serves as a coordination point for NADP(+). Residues asparagine 92 and aspartate 107 each contribute to the shikimate site. NADP(+) contacts are provided by residues 129-133 (GAGGA) and isoleucine 227. Position 229 (tyrosine 229) interacts with shikimate. Glycine 250 serves as a coordination point for NADP(+).

This sequence belongs to the shikimate dehydrogenase family. Homodimer.

It carries out the reaction shikimate + NADP(+) = 3-dehydroshikimate + NADPH + H(+). Its pathway is metabolic intermediate biosynthesis; chorismate biosynthesis; chorismate from D-erythrose 4-phosphate and phosphoenolpyruvate: step 4/7. Functionally, involved in the biosynthesis of the chorismate, which leads to the biosynthesis of aromatic amino acids. Catalyzes the reversible NADPH linked reduction of 3-dehydroshikimate (DHSA) to yield shikimate (SA). In Streptococcus pneumoniae (strain P1031), this protein is Shikimate dehydrogenase (NADP(+)).